A 166-amino-acid chain; its full sequence is Small ribosomal subunit protein uS5 (166 aa).

Positions 12–75 (YIEKLVQVNR…EAARRNMIQV (64 aa)) constitute an S5 DRBM domain.

Belongs to the universal ribosomal protein uS5 family. As to quaternary structure, part of the 30S ribosomal subunit. Contacts proteins S4 and S8.

Its function is as follows. With S4 and S12 plays an important role in translational accuracy. Located at the back of the 30S subunit body where it stabilizes the conformation of the head with respect to the body. The protein is Small ribosomal subunit protein uS5 of Pseudomonas fluorescens (strain SBW25).